The following is a 476-amino-acid chain: MGRKEEEDCSSWKKQTTNIRKTFIFMEVLGSGAFSEVFLVKQRVTGKLFALKCIKKSPAFRDSSLENEIAVLKRIKHENIVTLEDIYESTTHYYLVMQLVSGGELFDRILERGVYTEKDASLVIQQVLSAVKYLHENGIVHRDLKPENLLYLTPEENSKIMITDFGLSKMEQNGVMSTACGTPGYVAPEVLAQKPYSKAVDCWSIGVITYILLCGYPPFYEETESKLFEKIKEGYYEFESPFWDDISESAKDFICHLLEKDPNERYTCEKALRHPWIDGNTALHRDIYPSVSLQIQKNFAKSKWRQAFNAAAVVHHMRKLHMNLHSPSVRQEVENRPPVSPAPEVSRPGSHDSSITEAPILDPSTPLPALTRLPCSHSSRPSAPGGRSLNCLVNGSLRISSSLVPMQQGPLATGPCGCCSSCLNIGNKGKSSYCSEPTLFRKANKKQNFKSEVMVPVKAGGSTHCRAGQTGVCLIM.

The region spanning 23 to 277 (FIFMEVLGSG…CEKALRHPWI (255 aa)) is the Protein kinase domain. ATP contacts are provided by residues 29–37 (LGSGAFSEV) and Lys-52. The active-site Proton acceptor is Asp-143. The tract at residues 277-317 (IDGNTALHRDIYPSVSLQIQKNFAKSKWRQAFNAAAVVHHM) is autoinhibitory domain. The calmodulin-binding stretch occupies residues 297 to 318 (KNFAKSKWRQAFNAAAVVHHMR). A disordered region spans residues 326-387 (SPSVRQEVEN…SSRPSAPGGR (62 aa)).

This sequence belongs to the protein kinase superfamily. CAMK Ser/Thr protein kinase family. CaMK subfamily. Post-translationally, prenylated on Cys-473.

It is found in the cytoplasm. It localises to the golgi apparatus membrane. The protein resides in the cell membrane. It catalyses the reaction L-seryl-[protein] + ATP = O-phospho-L-seryl-[protein] + ADP + H(+). The catalysed reaction is L-threonyl-[protein] + ATP = O-phospho-L-threonyl-[protein] + ADP + H(+). Its activity is regulated as follows. Activated by Ca(2+)/calmodulin. Binding of calmodulin is thought to result in a conformational change and leads to activation through phosphorylation by CAMKK1. Calcium/calmodulin-dependent protein kinase belonging to a proposed calcium-triggered signaling cascade. In vitro phosphorylates transcription factor CREB1. This Rattus norvegicus (Rat) protein is Calcium/calmodulin-dependent protein kinase type 1G (Camk1g).